The primary structure comprises 46 residues: Cystatin WCPI-3 (46 aa).

The Secondary area of contact signature appears at 35–38 (VVAG).

This sequence belongs to the cystatin family. Phytocystatin subfamily.

Inhibitor of papain. The polypeptide is Cystatin WCPI-3 (Wisteria floribunda (Japanese wisteria)).